A 273-amino-acid chain; its full sequence is 3-methyl-2-oxobutanoate hydroxymethyltransferase (273 aa).

Mg(2+) is bound by residues Asp-53 and Asp-92. 3-methyl-2-oxobutanoate-binding positions include 53-54 (DS), Asp-92, and Lys-122. Glu-124 contacts Mg(2+). Glu-191 serves as the catalytic Proton acceptor.

Belongs to the PanB family. As to quaternary structure, homodecamer; pentamer of dimers. The cofactor is Mg(2+).

The protein resides in the cytoplasm. It catalyses the reaction 3-methyl-2-oxobutanoate + (6R)-5,10-methylene-5,6,7,8-tetrahydrofolate + H2O = 2-dehydropantoate + (6S)-5,6,7,8-tetrahydrofolate. The protein operates within cofactor biosynthesis; (R)-pantothenate biosynthesis; (R)-pantoate from 3-methyl-2-oxobutanoate: step 1/2. Functionally, catalyzes the reversible reaction in which hydroxymethyl group from 5,10-methylenetetrahydrofolate is transferred onto alpha-ketoisovalerate to form ketopantoate. This is 3-methyl-2-oxobutanoate hydroxymethyltransferase from Porphyromonas gingivalis (strain ATCC 33277 / DSM 20709 / CIP 103683 / JCM 12257 / NCTC 11834 / 2561).